The chain runs to 528 residues: Phosphoenolpyruvate carboxykinase (ATP) (528 aa).

Positions 56, 192, and 198 each coordinate substrate. ATP is bound by residues K198, H217, and 233-241 (GLSGTGKTT). 2 residues coordinate Mn(2+): K198 and H217. Residue D254 coordinates Mn(2+). ATP is bound by residues E282, R319, and T444. R319 serves as a coordination point for substrate.

The protein belongs to the phosphoenolpyruvate carboxykinase (ATP) family. It depends on Mn(2+) as a cofactor.

The protein localises to the cytoplasm. The catalysed reaction is oxaloacetate + ATP = phosphoenolpyruvate + ADP + CO2. It participates in carbohydrate biosynthesis; gluconeogenesis. In terms of biological role, involved in the gluconeogenesis. Catalyzes the conversion of oxaloacetate (OAA) to phosphoenolpyruvate (PEP) through direct phosphoryl transfer between the nucleoside triphosphate and OAA. The chain is Phosphoenolpyruvate carboxykinase (ATP) from Bacillus cereus (strain B4264).